Consider the following 431-residue polypeptide: Beta-1,4-glucuronyltransferase 1 (431 aa).

The Cytoplasmic portion of the chain corresponds to 1–11; that stretch reads MHFSKKCSVFK. A helical membrane pass occupies residues 12 to 32; that stretch reads VVLSALLIVALLQLLYLSFLS. The Lumenal segment spans residues 33 to 431; the sequence is KLHGKQQRYK…AKYPTSPRRC (399 aa). N-linked (GlcNAc...) asparagine glycosylation occurs at Asn216. Mn(2+) is bound by residues Asp241 and Asp243. The N-linked (GlcNAc...) asparagine glycan is linked to Asn314.

The protein belongs to the glycosyltransferase 49 family. Requires Mn(2+) as cofactor.

Its subcellular location is the golgi apparatus membrane. It catalyses the reaction 3-O-[beta-D-Xyl-(1-&gt;4)-Rib-ol-P-Rib-ol-P-3-beta-D-GalNAc-(1-&gt;3)-beta-D-GlcNAc-(1-&gt;4)-(O-6-P-alpha-D-Man)]-Thr-[protein] + UDP-alpha-D-glucuronate = 3-O-[beta-D-GlcA-(1-&gt;3)-beta-D-Xyl-(1-&gt;4)-Rib-ol-P-Rib-ol-P-3-beta-D-GalNAc-(1-&gt;3)-beta-D-GlcNAc-(1-&gt;4)-(O-6-P-alpha-D-Man)]-Thr-[protein] + UDP + H(+). The protein operates within protein modification; protein glycosylation. Beta-1,4-glucuronyltransferase involved in O-mannosylation of alpha-dystroglycan (DAG1). Transfers a glucuronic acid (GlcA) residue onto a xylose (Xyl) acceptor to produce the glucuronyl-beta-1,4-xylose-beta disaccharide primer, which is further elongated by LARGE, during synthesis of phosphorylated O-mannosyl glycan. Phosphorylated O-mannosyl glycan is a carbohydrate structure present in alpha-dystroglycan (DAG1), which is required for binding laminin G-like domain-containing extracellular proteins with high affinity. Required for axon guidance; via its function in O-mannosylation of alpha-dystroglycan (DAG1). This Danio rerio (Zebrafish) protein is Beta-1,4-glucuronyltransferase 1.